The sequence spans 137 residues: Large ribosomal subunit protein uL16 (137 aa).

Belongs to the universal ribosomal protein uL16 family. Part of the 50S ribosomal subunit.

Functionally, binds 23S rRNA and is also seen to make contacts with the A and possibly P site tRNAs. In Azotobacter vinelandii (strain DJ / ATCC BAA-1303), this protein is Large ribosomal subunit protein uL16.